A 194-amino-acid polypeptide reads, in one-letter code: NAD(P)H-quinone oxidoreductase subunit I (194 aa).

4Fe-4S ferredoxin-type domains follow at residues 55–84 (GRIH…VDWE) and 95–124 (NHYS…MTEE). The [4Fe-4S] cluster site is built by cysteine 64, cysteine 67, cysteine 70, cysteine 74, cysteine 104, cysteine 107, cysteine 110, and cysteine 114. The segment at 173–194 (DLPAGSRRAGLRPEEIVEQSQQ) is disordered.

The protein belongs to the complex I 23 kDa subunit family. As to quaternary structure, NDH-1 is composed of at least 11 different subunits. [4Fe-4S] cluster serves as cofactor.

The protein localises to the cellular thylakoid membrane. It catalyses the reaction a plastoquinone + NADH + (n+1) H(+)(in) = a plastoquinol + NAD(+) + n H(+)(out). The enzyme catalyses a plastoquinone + NADPH + (n+1) H(+)(in) = a plastoquinol + NADP(+) + n H(+)(out). NDH-1 shuttles electrons from an unknown electron donor, via FMN and iron-sulfur (Fe-S) centers, to quinones in the respiratory and/or the photosynthetic chain. The immediate electron acceptor for the enzyme in this species is believed to be plastoquinone. Couples the redox reaction to proton translocation, and thus conserves the redox energy in a proton gradient. This Leptolyngbya boryana (Plectonema boryanum) protein is NAD(P)H-quinone oxidoreductase subunit I (ndhI).